The following is a 110-amino-acid chain: Nucleoid-associated protein NFA_2940 (110 aa).

The protein belongs to the YbaB/EbfC family. In terms of assembly, homodimer.

It is found in the cytoplasm. The protein localises to the nucleoid. Binds to DNA and alters its conformation. May be involved in regulation of gene expression, nucleoid organization and DNA protection. In Nocardia farcinica (strain IFM 10152), this protein is Nucleoid-associated protein NFA_2940.